The chain runs to 672 residues: Probable copper-transporting P-type ATPase B (672 aa).

Positions 1–17 (MEHHSHQEHENHTSHGN) are enriched in basic and acidic residues. The tract at residues 1 to 22 (MEHHSHQEHENHTSHGNHEHHH) is disordered. 6 helical membrane passes run 30–50 (FFIS…MGVK), 55–75 (ISFT…FFYG), 93–113 (GMMT…LYAF), 125–145 (TMDF…GHWI), 282–302 (GYLF…WMLI), and 313–333 (LVTV…PLVT). Asp-365 functions as the 4-aspartylphosphate intermediate in the catalytic mechanism. Residues Asp-563 and Asp-567 each contribute to the Mg(2+) site. The next 2 helical transmembrane spans lie at 621-643 (LWWG…ASIG) and 647-669 (SPAV…AFTL).

This sequence belongs to the cation transport ATPase (P-type) (TC 3.A.3) family. Type IB subfamily.

It localises to the cell membrane. It carries out the reaction Cu(+)(in) + ATP + H2O = Cu(+)(out) + ADP + phosphate + H(+). Involved in copper transport. The protein is Probable copper-transporting P-type ATPase B (copB) of Staphylococcus aureus.